The following is a 248-amino-acid chain: 2,3-bisphosphoglycerate-dependent phosphoglycerate mutase (248 aa).

Residues 8-15 (RHGESEWN), 21-22 (TG), R60, 87-90 (ERHY), K98, 114-115 (RR), and 183-184 (GN) contribute to the substrate site. H9 functions as the Tele-phosphohistidine intermediate in the catalytic mechanism. E87 serves as the catalytic Proton donor/acceptor.

This sequence belongs to the phosphoglycerate mutase family. BPG-dependent PGAM subfamily.

It catalyses the reaction (2R)-2-phosphoglycerate = (2R)-3-phosphoglycerate. The protein operates within carbohydrate degradation; glycolysis; pyruvate from D-glyceraldehyde 3-phosphate: step 3/5. Catalyzes the interconversion of 2-phosphoglycerate and 3-phosphoglycerate. This is 2,3-bisphosphoglycerate-dependent phosphoglycerate mutase from Borrelia turicatae (strain 91E135).